A 247-amino-acid chain; its full sequence is ATP synthase subunit a, chloroplastic (247 aa).

The next 5 helical transmembrane spans lie at 38-58, 95-115, 134-154, 199-219, and 220-240; these read QVLI…AIAV, VPFI…GALL, INTT…AGLT, LVVV…VMFL, and GLFT…AYIG.

This sequence belongs to the ATPase A chain family. F-type ATPases have 2 components, CF(1) - the catalytic core - and CF(0) - the membrane proton channel. CF(1) has five subunits: alpha(3), beta(3), gamma(1), delta(1), epsilon(1). CF(0) has four main subunits: a, b, b' and c.

Its subcellular location is the plastid. It is found in the chloroplast thylakoid membrane. In terms of biological role, key component of the proton channel; it plays a direct role in the translocation of protons across the membrane. The polypeptide is ATP synthase subunit a, chloroplastic (Illicium oligandrum (Star anise)).